The chain runs to 282 residues: E3 ubiquitin-protein ligase SIAH1B (282 aa).

The span at Met-1–Pro-17 shows a compositional bias: polar residues. The tract at residues Met-1–Pro-23 is disordered. Ser-19 bears the Phosphoserine; by ATM and ATR mark. An RING-type zinc finger spans residues Cys-41–Arg-76. The SBD stretch occupies residues Val-90–Cys-282. The SIAH-type zinc-finger motif lies at Ser-93–Lys-153. Zn(2+) contacts are provided by Cys-98, Cys-105, His-117, Cys-121, Cys-128, Cys-135, His-147, and His-152.

Belongs to the SINA (Seven in absentia) family. In terms of assembly, homodimer. Post-translationally, phosphorylated on Ser-19 by ATM and ATR. In terms of tissue distribution, widely expressed at low level in embryos and adults. Due to the high similarity between SIAH1A and SIAH1B, it is difficult to distinguish its own tissue specificity. Overexpressed in endothelial cells of adult lung.

It localises to the cytoplasm. The protein resides in the nucleus. The catalysed reaction is S-ubiquitinyl-[E2 ubiquitin-conjugating enzyme]-L-cysteine + [acceptor protein]-L-lysine = [E2 ubiquitin-conjugating enzyme]-L-cysteine + N(6)-ubiquitinyl-[acceptor protein]-L-lysine.. Its pathway is protein modification; protein ubiquitination. Functionally, E3 ubiquitin-protein ligase that mediates ubiquitination and subsequent proteasomal degradation of target proteins. E3 ubiquitin ligases accept ubiquitin from an E2 ubiquitin-conjugating enzyme in the form of a thioester and then directly transfers the ubiquitin to targeted substrates. Mediates E3 ubiquitin ligase activity either through direct binding to substrates or by functioning as the essential RING domain subunit of larger E3 complexes. The sequence is that of E3 ubiquitin-protein ligase SIAH1B (Siah1b) from Mus musculus (Mouse).